Here is a 205-residue protein sequence, read N- to C-terminus: Small ribosomal subunit protein uS4 (205 aa).

One can recognise an S4 RNA-binding domain in the interval 94–157; it reads SRLDTVVYRM…QQIPLIQESI (64 aa).

It belongs to the universal ribosomal protein uS4 family. In terms of assembly, part of the 30S ribosomal subunit. Contacts protein S5. The interaction surface between S4 and S5 is involved in control of translational fidelity.

One of the primary rRNA binding proteins, it binds directly to 16S rRNA where it nucleates assembly of the body of the 30S subunit. Functionally, with S5 and S12 plays an important role in translational accuracy. The polypeptide is Small ribosomal subunit protein uS4 (Rickettsia prowazekii (strain Madrid E)).